A 557-amino-acid polypeptide reads, in one-letter code: Arginine--tRNA ligase (557 aa).

The short motif at 128–138 (ANPTGPLHVGH) is the 'HIGH' region element.

Belongs to the class-I aminoacyl-tRNA synthetase family. In terms of assembly, monomer.

It localises to the cytoplasm. It catalyses the reaction tRNA(Arg) + L-arginine + ATP = L-arginyl-tRNA(Arg) + AMP + diphosphate. The protein is Arginine--tRNA ligase of Thiobacillus denitrificans (strain ATCC 25259 / T1).